Here is a 455-residue protein sequence, read N- to C-terminus: Chromosomal replication initiator protein DnaA (455 aa).

Positions 1–75 (MDTNNNIEKE…EILSQNKVGM (75 aa)) are domain I, interacts with DnaA modulators. The interval 75 to 106 (MHLAHSVDVRIEVAPKIQISTQSNINYKATKM) is domain II. The domain III, AAA+ region stretch occupies residues 107–321 (SVKDSYTFEN…GAIIKISVNA (215 aa)). ATP is bound by residues glycine 151, glycine 153, lysine 154, and threonine 155. The interval 322-455 (NLMNASIDLN…DKKTAFNSSE (134 aa)) is domain IV, binds dsDNA.

Belongs to the DnaA family. Oligomerizes as a right-handed, spiral filament on DNA at oriC.

It localises to the cytoplasm. Its function is as follows. Plays an essential role in the initiation and regulation of chromosomal replication. ATP-DnaA binds to the origin of replication (oriC) to initiate formation of the DNA replication initiation complex once per cell cycle. Binds the DnaA box (a 9 base pair repeat at the origin) and separates the double-stranded (ds)DNA. Forms a right-handed helical filament on oriC DNA; dsDNA binds to the exterior of the filament while single-stranded (ss)DNA is stabiized in the filament's interior. The ATP-DnaA-oriC complex binds and stabilizes one strand of the AT-rich DNA unwinding element (DUE), permitting loading of DNA polymerase. After initiation quickly degrades to an ADP-DnaA complex that is not apt for DNA replication. Binds acidic phospholipids. The chain is Chromosomal replication initiator protein DnaA from Helicobacter pylori (strain HPAG1).